A 587-amino-acid polypeptide reads, in one-letter code: Thiol:disulfide interchange protein DsbD 2 (587 aa).

Positions 1–18 are cleaved as a signal peptide; that stretch reads MRVLILLLMLLLPGLSQA. The Periplasmic portion of the chain corresponds to 19–172; sequence QPGDDLFAPR…SLQAGNLAWS (154 aa). Disulfide bonds link Cys-124-Cys-130 and Cys-188-Cys-308. A helical membrane pass occupies residues 173 to 193; it reads LLLFFGLGLLLAFAPCSLPML. The Cytoplasmic portion of the chain corresponds to 194-216; sequence PILAGLVVGSGAGPRRGLLLAGS. Residues 217 to 237 form a helical membrane-spanning segment; the sequence is YVLSMALVYAGLGVVAALLGG. The Periplasmic segment spans residues 238–246; sequence NLQAWLQQP. A helical transmembrane segment spans residues 247–267; the sequence is WLLGSFAALFVFLALPMFGFF. Over 268-299 the chain is Cytoplasmic; the sequence is ELQLPAALRDRLDGLSRGRKGGSLAGAAALGA. The helical transmembrane segment at 300–320 threads the bilayer; sequence LSGLLVGPCMTAPLAGALLYI. Residues 321 to 330 are Periplasmic-facing; that stretch reads AQTGNALHGG. The helical transmembrane segment at 331-351 threads the bilayer; the sequence is LVLFSLGLGIGMPLLLLVTVG. The Cytoplasmic segment spans residues 352–360; sequence SRFLPKPGP. Residues 361 to 381 traverse the membrane as a helical segment; the sequence is WMNLVKGVFGFLFLGTAWILL. Residues 382–383 are Periplasmic-facing; that stretch reads RP. The helical transmembrane segment at 384–404 threads the bilayer; the sequence is LLGEALWIGLGGALLLVLAYA. Residues 405-416 are Cytoplasmic-facing; it reads ALHTARGLARHA. Residues 417 to 437 form a helical membrane-spanning segment; the sequence is VLFGAAGCIFGLWGAAMLLGA. Residues 438–587 lie on the Periplasmic side of the membrane; the sequence is AAGADDPWRP…AHWQATRERG (150 aa). One can recognise a Thioredoxin domain in the interval 448 to 585; it reads LQVYAAANRG…FLAHWQATRE (138 aa). Cysteines 500 and 503 form a disulfide.

It belongs to the thioredoxin family. DsbD subfamily.

The protein resides in the cell inner membrane. It carries out the reaction [protein]-dithiol + NAD(+) = [protein]-disulfide + NADH + H(+). The enzyme catalyses [protein]-dithiol + NADP(+) = [protein]-disulfide + NADPH + H(+). Required to facilitate the formation of correct disulfide bonds in some periplasmic proteins and for the assembly of the periplasmic c-type cytochromes. Acts by transferring electrons from cytoplasmic thioredoxin to the periplasm. This transfer involves a cascade of disulfide bond formation and reduction steps. The sequence is that of Thiol:disulfide interchange protein DsbD 2 from Pseudomonas aeruginosa (strain ATCC 15692 / DSM 22644 / CIP 104116 / JCM 14847 / LMG 12228 / 1C / PRS 101 / PAO1).